Reading from the N-terminus, the 194-residue chain is tRNA (guanosine(18)-2'-O)-methyltransferase (194 aa).

S-adenosyl-L-methionine is bound by residues Thr-99, 122-126 (GAEKW), Ile-142, and Leu-151.

The protein belongs to the class IV-like SAM-binding methyltransferase superfamily. RNA methyltransferase TrmH family. In terms of assembly, monomer.

It catalyses the reaction guanosine(18) in tRNA + S-adenosyl-L-methionine = 2'-O-methylguanosine(18) in tRNA + S-adenosyl-L-homocysteine + H(+). Its activity is regulated as follows. Stimulated by magnesium ions and spermine. Inhibited by S-adenosyl-homocysteine. Its function is as follows. Catalyzes the 2'-O methylation of guanosine at position 18 in tRNA. This Thermus thermophilus (strain ATCC BAA-163 / DSM 7039 / HB27) protein is tRNA (guanosine(18)-2'-O)-methyltransferase.